We begin with the raw amino-acid sequence, 126 residues long: Large ribosomal subunit protein bL12 (126 aa).

This sequence belongs to the bacterial ribosomal protein bL12 family. As to quaternary structure, homodimer. Part of the ribosomal stalk of the 50S ribosomal subunit. Forms a multimeric L10(L12)X complex, where L10 forms an elongated spine to which 2 to 4 L12 dimers bind in a sequential fashion. Binds GTP-bound translation factors.

Forms part of the ribosomal stalk which helps the ribosome interact with GTP-bound translation factors. Is thus essential for accurate translation. In Chlorobaculum parvum (strain DSM 263 / NCIMB 8327) (Chlorobium vibrioforme subsp. thiosulfatophilum), this protein is Large ribosomal subunit protein bL12.